The primary structure comprises 265 residues: Energy-coupling factor transporter transmembrane protein EcfT (265 aa).

Helical transmembrane passes span 29-49 (IILFATLIFLANNTVTYAILI), 73-93 (VWILILFTVVLHIFITKGGTV), 110-130 (AIFISLRLGLLILISSLLTLT), 143-163 (LLGPLGKIGIPVHDIALMMSI), and 242-262 (FTWRDGIVAVVSVILVIVIGW).

It belongs to the energy-coupling factor EcfT family. In terms of assembly, forms a stable energy-coupling factor (ECF) transporter complex composed of 2 membrane-embedded substrate-binding proteins (S component), 2 ATP-binding proteins (A component) and 2 transmembrane proteins (T component). May be able to interact with more than 1 S component at a time.

Its subcellular location is the cell membrane. Transmembrane (T) component of an energy-coupling factor (ECF) ABC-transporter complex. Unlike classic ABC transporters this ECF transporter provides the energy necessary to transport a number of different substrates. The protein is Energy-coupling factor transporter transmembrane protein EcfT of Brevibacillus brevis (strain 47 / JCM 6285 / NBRC 100599).